The primary structure comprises 291 residues: Acetyl-coenzyme A carboxylase carboxyl transferase subunit beta (291 aa).

The 269-residue stretch at 23 to 291 (VYTKDPVSGE…TPASASVAKS (269 aa)) folds into the CoA carboxyltransferase N-terminal domain.

It belongs to the AccD/PCCB family. Acetyl-CoA carboxylase is a heterohexamer composed of biotin carboxyl carrier protein (AccB), biotin carboxylase (AccC) and two subunits each of ACCase subunit alpha (AccA) and ACCase subunit beta (AccD).

The protein localises to the cytoplasm. It catalyses the reaction N(6)-carboxybiotinyl-L-lysyl-[protein] + acetyl-CoA = N(6)-biotinyl-L-lysyl-[protein] + malonyl-CoA. It participates in lipid metabolism; malonyl-CoA biosynthesis; malonyl-CoA from acetyl-CoA: step 1/1. Component of the acetyl coenzyme A carboxylase (ACC) complex. Biotin carboxylase (BC) catalyzes the carboxylation of biotin on its carrier protein (BCCP) and then the CO(2) group is transferred by the transcarboxylase to acetyl-CoA to form malonyl-CoA. This is Acetyl-coenzyme A carboxylase carboxyl transferase subunit beta from Opitutus terrae (strain DSM 11246 / JCM 15787 / PB90-1).